The chain runs to 435 residues: Nucleoredoxin (435 aa).

S2 carries the post-translational modification N-acetylserine. The region spanning 167–314 (PKPFREVIAG…FPWHPKPVLE (148 aa)) is the Thioredoxin domain.

It belongs to the nucleoredoxin family. Associates with the phosphatase 2A holoenzyme. Interacts with PPP2CA; the interaction is direct. Interacts with DVL1 (via PDZ domain); the interaction is direct and regulated by oxidative stress. In terms of tissue distribution, widely expressed with higher expression in testis and skin.

Its subcellular location is the cytoplasm. It localises to the cytosol. It is found in the nucleus. The catalysed reaction is [protein]-dithiol + NAD(+) = [protein]-disulfide + NADH + H(+). It carries out the reaction [protein]-dithiol + NADP(+) = [protein]-disulfide + NADPH + H(+). Its function is as follows. Functions as a redox-dependent negative regulator of the Wnt signaling pathway, possibly by preventing ubiquitination of DVL3 by the BCR(KLHL12) complex. May also function as a transcriptional regulator act as a regulator of protein phosphatase 2A (PP2A). The chain is Nucleoredoxin (Nxn) from Mus musculus (Mouse).